The primary structure comprises 431 residues: UDP-N-acetylglucosamine--N-acetylmuramyl-(pentapeptide) pyrophosphoryl-undecaprenol N-acetylglucosamine transferase (431 aa).

Residues 29-31, Asn-141, Arg-177, Ser-205, Ile-258, and Gln-303 each bind UDP-N-acetyl-alpha-D-glucosamine; that span reads TGG. Positions 370 to 431 are disordered; sequence AGSGDGQPPA…NPGASAGGAP (62 aa). Residues 395–420 are compositionally biased toward polar residues; sequence KQGSMQTSVNGDRSAQLIATNPQSRL.

The protein belongs to the glycosyltransferase 28 family. MurG subfamily.

It localises to the cell inner membrane. It carries out the reaction di-trans,octa-cis-undecaprenyl diphospho-N-acetyl-alpha-D-muramoyl-L-alanyl-D-glutamyl-meso-2,6-diaminopimeloyl-D-alanyl-D-alanine + UDP-N-acetyl-alpha-D-glucosamine = di-trans,octa-cis-undecaprenyl diphospho-[N-acetyl-alpha-D-glucosaminyl-(1-&gt;4)]-N-acetyl-alpha-D-muramoyl-L-alanyl-D-glutamyl-meso-2,6-diaminopimeloyl-D-alanyl-D-alanine + UDP + H(+). It functions in the pathway cell wall biogenesis; peptidoglycan biosynthesis. Its function is as follows. Cell wall formation. Catalyzes the transfer of a GlcNAc subunit on undecaprenyl-pyrophosphoryl-MurNAc-pentapeptide (lipid intermediate I) to form undecaprenyl-pyrophosphoryl-MurNAc-(pentapeptide)GlcNAc (lipid intermediate II). This chain is UDP-N-acetylglucosamine--N-acetylmuramyl-(pentapeptide) pyrophosphoryl-undecaprenol N-acetylglucosamine transferase, found in Xanthomonas euvesicatoria pv. vesicatoria (strain 85-10) (Xanthomonas campestris pv. vesicatoria).